Here is a 198-residue protein sequence, read N- to C-terminus: Small ribosomal subunit protein uS4 (198 aa).

Residues 91–151 (SRLDNIVYRL…EKSKNLKIVE (61 aa)) enclose the S4 RNA-binding domain.

Belongs to the universal ribosomal protein uS4 family. In terms of assembly, part of the 30S ribosomal subunit. Contacts protein S5. The interaction surface between S4 and S5 is involved in control of translational fidelity.

In terms of biological role, one of the primary rRNA binding proteins, it binds directly to 16S rRNA where it nucleates assembly of the body of the 30S subunit. Functionally, with S5 and S12 plays an important role in translational accuracy. This chain is Small ribosomal subunit protein uS4, found in Phytoplasma australiense.